The following is a 782-amino-acid chain: General transcription and DNA repair factor IIH helicase/translocase subunit XPB (782 aa).

The span at 1-11 shows a compositional bias: basic and acidic residues; the sequence is MGKRDRADRDK. Disordered stretches follow at residues 1–51 and 218–241; these read MGKR…ESGT and SAISKTAESSGGPSTSRVTDPQGK. The Nuclear localization signal signature appears at 6–18; the sequence is RADRDKKKSRKRH. Over residues 21-30 the composition is skewed to acidic residues; it reads DEEDDEEDAP. Polar residues predominate over residues 218-236; the sequence is SAISKTAESSGGPSTSRVT. Positions 327–488 constitute a Helicase ATP-binding domain; sequence MFGNGRARSG…DLNFLIGPKL (162 aa). 340–347 is a binding site for ATP; it reads LPCGAGKS. Positions 441-444 match the DEVH box motif; the sequence is DEVH. The Helicase C-terminal domain maps to 542–702; it reads RACQFLIKFH…LAGMEEEDLA (161 aa). S686 is modified (phosphoserine). Residue S751 is modified to Phosphoserine; by CK2.

The protein belongs to the helicase family. RAD25/XPB subfamily. As to quaternary structure, component of the 7-subunit TFIIH core complex composed of XPB/ERCC3, XPD/ERCC2, GTF2H1, GTF2H2, GTF2H3, GTF2H4 and GTF2H5, which is active in NER. The core complex associates with the 3-subunit CDK-activating kinase (CAK) module composed of CCNH/cyclin H, CDK7 and MNAT1 to form the 10-subunit holoenzyme (holo-TFIIH) active in transcription. Interacts with PUF60. Interacts with ATF7IP. Interacts with KAT2A; leading to KAT2A recruitment to promoters and acetylation of histones. Part of TBP-based Pol II pre-initiation complex (PIC), in which Pol II core assembles with general transcription factors and other specific initiation factors including GTF2E1, GTF2E2, GTF2F1, GTF2F2, TCEA1, ERCC2, ERCC3, GTF2H2, GTF2H3, GTF2H4, GTF2H5, GTF2A1, GTF2A2, GTF2B and TBP; this large multi-subunit PIC complex mediates DNA unwinding and targets Pol II core to the transcription start site where the first phosphodiester bond forms. Phosphorylation on Ser-751 by CK2 controls the 5'-excision activity of ERCC1-XPF endonuclease; phosphorylated protein inhibits the excision activity and thus NER. Dephosphorylation reactivates the 5'-excision step. Phosphorylation has no effect on transcription or the 3'-5' helicase activity.

It is found in the nucleus. It catalyses the reaction Couples ATP hydrolysis with the unwinding of duplex DNA by translocating in the 3'-5' direction.. The catalysed reaction is ATP + H2O = ADP + phosphate + H(+). With respect to regulation, phosphorylation on Ser-751 by CK2 controls the 5'-excision activity of ERCC1-XPF endonuclease; phosphorylated protein inhibits the excision activity and thus NER. ATPase activity is stimulated by TFIIH subunit p52 (GTF2H4). DNA translocase activity by this subunit in TFIIH is stimulated by XPA, ERCC5/XPG and XFP plus ERCC1. Its function is as follows. ATP-dependent 3'-5' DNA helicase/translocase; binds dsDNA rather than ssDNA, unzipping it in a translocase rather than classical helicase activity. Component of the general transcription and DNA repair factor IIH (TFIIH) core complex. When complexed to CDK-activating kinase (CAK), involved in RNA transcription by RNA polymerase II. The ATPase activity of XPB/ERCC3, but not its helicase activity, is required for DNA opening; it may wrap around the damaged DNA wedging it open, causing localized melting and twisting that allows XPD/ERCC2 helicase to anchor. The ATP-dependent helicase activity of XPB/ERCC3 may be required for promoter escape. Also involved in transcription-coupled nucleotide excision repair (NER) of damaged DNA. In NER, TFIIH acts by opening DNA around the lesion to allow the excision of the damaged oligonucleotide and its replacement by a new DNA fragment. The structure of the TFIIH transcription complex differs from the NER-TFIIH complex; large movements by XPD/ERCC2 and XPB/ERCC3 are stabilized by XPA. In Pongo abelii (Sumatran orangutan), this protein is General transcription and DNA repair factor IIH helicase/translocase subunit XPB (ERCC3).